The primary structure comprises 147 residues: uncharacterized protein (147 aa).

The next 2 helical transmembrane spans lie at Trp-42–Pro-62 and Leu-64–Phe-84.

Its subcellular location is the cell membrane. This is an uncharacterized protein from Bacillus subtilis (strain 168).